The primary structure comprises 117 residues: Large ribosomal subunit protein uL18 (117 aa).

This sequence belongs to the universal ribosomal protein uL18 family. Part of the 50S ribosomal subunit; part of the 5S rRNA/L5/L18/L25 subcomplex. Contacts the 5S and 23S rRNAs.

In terms of biological role, this is one of the proteins that bind and probably mediate the attachment of the 5S RNA into the large ribosomal subunit, where it forms part of the central protuberance. This is Large ribosomal subunit protein uL18 from Neisseria gonorrhoeae (strain ATCC 700825 / FA 1090).